The following is a 442-amino-acid chain: FBD-associated F-box protein At1g66310 (442 aa).

The 47-residue stretch at 18–64 (VDWLRDLPESLLCHILLNLPTKDVVKTSVLSSKWRNLWRLVPGLDLD) folds into the F-box domain. The FBD domain occupies 363–415 (KRRTSVLSGPRRLLSSLEYVEIESPLTGEVFEMKLVSYLLENSPILKKLTINL).

This is FBD-associated F-box protein At1g66310 from Arabidopsis thaliana (Mouse-ear cress).